The chain runs to 173 residues: Urease accessory protein UreE (173 aa).

Residues Pro-136–Gly-173 form a disordered region. Residues Gln-146–Gly-173 show a composition bias toward basic and acidic residues.

The protein belongs to the UreE family.

It is found in the cytoplasm. Functionally, involved in urease metallocenter assembly. Binds nickel. Probably functions as a nickel donor during metallocenter assembly. This is Urease accessory protein UreE from Beijerinckia indica subsp. indica (strain ATCC 9039 / DSM 1715 / NCIMB 8712).